The sequence spans 605 residues: Elongation factor 4 (605 aa).

The tr-type G domain maps to cysteine 9–alanine 192. Residues aspartate 21–threonine 26 and asparagine 139–aspartate 142 each bind GTP.

Belongs to the TRAFAC class translation factor GTPase superfamily. Classic translation factor GTPase family. LepA subfamily.

It localises to the cell inner membrane. It catalyses the reaction GTP + H2O = GDP + phosphate + H(+). Functionally, required for accurate and efficient protein synthesis under certain stress conditions. May act as a fidelity factor of the translation reaction, by catalyzing a one-codon backward translocation of tRNAs on improperly translocated ribosomes. Back-translocation proceeds from a post-translocation (POST) complex to a pre-translocation (PRE) complex, thus giving elongation factor G a second chance to translocate the tRNAs correctly. Binds to ribosomes in a GTP-dependent manner. In Chlorobium chlorochromatii (strain CaD3), this protein is Elongation factor 4.